The chain runs to 432 residues: Histidine--tRNA ligase (432 aa).

The protein belongs to the class-II aminoacyl-tRNA synthetase family. As to quaternary structure, homodimer.

The protein localises to the cytoplasm. The enzyme catalyses tRNA(His) + L-histidine + ATP = L-histidyl-tRNA(His) + AMP + diphosphate + H(+). This chain is Histidine--tRNA ligase, found in Symbiobacterium thermophilum (strain DSM 24528 / JCM 14929 / IAM 14863 / T).